We begin with the raw amino-acid sequence, 194 residues long: Cyclin-dependent kinase inhibitor 4 (194 aa).

A compositionally biased stretch (basic and acidic residues) spans 49–58 (LELRSRRLEK). 2 disordered regions span residues 49-70 (LELR…PRRR) and 107-139 (TRET…SHCK).

It belongs to the CDI family. ICK/KRP subfamily.

This is Cyclin-dependent kinase inhibitor 4 (KRP4) from Oryza sativa subsp. japonica (Rice).